The primary structure comprises 223 residues: Endonuclease NucS (223 aa).

The protein belongs to the NucS endonuclease family.

It localises to the cytoplasm. Functionally, cleaves both 3' and 5' ssDNA extremities of branched DNA structures. This is Endonuclease NucS from Streptomyces avermitilis (strain ATCC 31267 / DSM 46492 / JCM 5070 / NBRC 14893 / NCIMB 12804 / NRRL 8165 / MA-4680).